A 1507-amino-acid polypeptide reads, in one-letter code: Chromatin-remodeling ATPase INO80 (1507 aa).

2 disordered regions span residues 30–82 (PEDE…DAED) and 428–452 (RKKQ…KRQQ). Positions 38–67 (GSSSQDESRSTQGGVVANYSNGSKSRMNAS) are enriched in polar residues. One can recognise a DBINO domain in the interval 350 to 475 (AWINIVRRDI…SHFMQNKTDS (126 aa)). Residues 428 to 450 (RKKQEKEAAEAFKREQEQRESKR) are compositionally biased toward basic and acidic residues. Residues 598-769 (VNCYEQGLNG…WALLHFIMPM (172 aa)) enclose the Helicase ATP-binding domain. 611–618 (DEMGLGKT) provides a ligand contact to ATP. The Helicase C-terminal domain occupies 1210-1360 (TLDILLKRLR…QLVMTGGHVQ (151 aa)). A disordered region spans residues 1415–1507 (LEELEDVDRQ…KGFDPSSSAN (93 aa)). The span at 1491–1507 (ASVTESNKGFDPSSSAN) shows a compositional bias: polar residues.

It belongs to the SNF2/RAD54 helicase family. In terms of assembly, component of the INO80 chromatin-remodeling complex. Associates with REF6/EIN6.

It localises to the nucleus. It catalyses the reaction ATP + H2O = ADP + phosphate + H(+). Its function is as follows. ATPase component of the chromatin remodeling INO80 complex which is involved in transcriptional regulation, DNA replication and DNA repair. Binds DNA. As part of the INO80 complex, remodels chromatin by shifting nucleosomes. The INO80 complex controls ethylene-induced H2A.Z eviction dynamics. Positive regulator of homologous recombination, but not an essential component of homologous recombination. Not involved in the illegitimate repair pathway. The protein is Chromatin-remodeling ATPase INO80 of Arabidopsis thaliana (Mouse-ear cress).